Consider the following 190-residue polypeptide: Peptide deformylase (190 aa).

Positions 94 and 136 each coordinate Fe cation. Glu137 is an active-site residue. His140 is a binding site for Fe cation.

This sequence belongs to the polypeptide deformylase family. Requires Fe(2+) as cofactor.

It catalyses the reaction N-terminal N-formyl-L-methionyl-[peptide] + H2O = N-terminal L-methionyl-[peptide] + formate. Functionally, removes the formyl group from the N-terminal Met of newly synthesized proteins. Requires at least a dipeptide for an efficient rate of reaction. N-terminal L-methionine is a prerequisite for activity but the enzyme has broad specificity at other positions. In Chlorobium luteolum (strain DSM 273 / BCRC 81028 / 2530) (Pelodictyon luteolum), this protein is Peptide deformylase.